A 1597-amino-acid polypeptide reads, in one-letter code: Protein STU1 (1597 aa).

4 disordered regions span residues 220 to 265, 519 to 958, 1005 to 1154, and 1307 to 1332; these read GNSS…PSSS, DKVN…RPIH, DAEA…ELNT, and SQRP…SSLV. Residues 535–552 are compositionally biased toward basic and acidic residues; the sequence is APRESLKEVMRRSRESSV. The span at 577–605 shows a compositional bias: low complexity; sequence SSGLVGRSLSGSNLTDRSNRLSSTSTSSR. Composition is skewed to polar residues over residues 610 to 622 and 632 to 645; these read AVSD…QMTR and PSLT…SLTR. Basic and acidic residues-rich tracts occupy residues 660–673 and 694–708; these read GSRE…DQNR and ESSR…DPSR. Residues 709-726 show a composition bias toward polar residues; that stretch reads ESSLAPSVHSSTAISRES. Residues 765 to 781 show a composition bias toward low complexity; the sequence is EETMNEVTTAEATATTA. Composition is skewed to polar residues over residues 791–801 and 808–822; these read PRESTPPNSSP and PATQ…TGKS. Residues 832–846 show a composition bias toward basic and acidic residues; sequence ELSRDLNGESKHLKE. Polar residues-rich tracts occupy residues 918–933, 1013–1025, and 1036–1045; these read DSQS…QSEP, TEQT…SDTA, and NSEQGPSTEP. Residues 1081–1091 are compositionally biased toward basic and acidic residues; the sequence is ASDEIETDHTK. The span at 1108–1119 shows a compositional bias: acidic residues; that stretch reads EPMEICDSDNDA. Positions 1122-1139 are enriched in polar residues; the sequence is NGTNPDTKCQDQQDSTTP. The stretch at 1537-1573 is one HEAT repeat; that stretch reads PSYETQLLALITELISDPDPLVRRVTVGLVVRVLRVS.

This sequence belongs to the CLASP family. As to quaternary structure, interacts with microtubules.

The protein resides in the cytoplasm. Its subcellular location is the cytoskeleton. It localises to the nucleus. The protein localises to the spindle. Functionally, microtubule binding protein that promotes the stabilization of dynamic microtubules. Required for mitotic spindle formation. This Yarrowia lipolytica (strain CLIB 122 / E 150) (Yeast) protein is Protein STU1 (STU1).